Reading from the N-terminus, the 133-residue chain is Large ribosomal subunit protein bL17 (133 aa).

This sequence belongs to the bacterial ribosomal protein bL17 family. As to quaternary structure, part of the 50S ribosomal subunit. Contacts protein L32.

The chain is Large ribosomal subunit protein bL17 from Nitratidesulfovibrio vulgaris (strain DSM 19637 / Miyazaki F) (Desulfovibrio vulgaris).